The primary structure comprises 392 residues: Alaserpin (392 aa).

The signal sequence occupies residues 1-16; it reads MKIIMCIFGLAALAMA. A glycan (N-linked (GlcNAc...) asparagine) is linked at Asn85.

It belongs to the serpin family. As to expression, hemolymph.

Its subcellular location is the secreted. The protein resides in the extracellular space. Functionally, inhibits elastase. The protein is Alaserpin of Manduca sexta (Tobacco hawkmoth).